The following is a 406-amino-acid chain: Arginine deiminase (406 aa).

The active-site Amidino-cysteine intermediate is C396.

This sequence belongs to the arginine deiminase family.

It localises to the cytoplasm. It carries out the reaction L-arginine + H2O = L-citrulline + NH4(+). The protein operates within amino-acid degradation; L-arginine degradation via ADI pathway; carbamoyl phosphate from L-arginine: step 1/2. The sequence is that of Arginine deiminase from Salmonella typhimurium (strain LT2 / SGSC1412 / ATCC 700720).